The sequence spans 89 residues: Co-chaperonin GroES (89 aa).

Belongs to the GroES chaperonin family. In terms of assembly, heptamer of 7 subunits arranged in a ring. Interacts with the chaperonin GroEL.

The protein resides in the cytoplasm. Functionally, together with the chaperonin GroEL, plays an essential role in assisting protein folding. The GroEL-GroES system forms a nano-cage that allows encapsulation of the non-native substrate proteins and provides a physical environment optimized to promote and accelerate protein folding. GroES binds to the apical surface of the GroEL ring, thereby capping the opening of the GroEL channel. This chain is Co-chaperonin GroES, found in Kosmotoga olearia (strain ATCC BAA-1733 / DSM 21960 / TBF 19.5.1).